Here is a 140-residue protein sequence, read N- to C-terminus: Ribosome-binding factor A (140 aa).

This sequence belongs to the RbfA family. As to quaternary structure, monomer. Binds 30S ribosomal subunits, but not 50S ribosomal subunits or 70S ribosomes.

It localises to the cytoplasm. One of several proteins that assist in the late maturation steps of the functional core of the 30S ribosomal subunit. Associates with free 30S ribosomal subunits (but not with 30S subunits that are part of 70S ribosomes or polysomes). Required for efficient processing of 16S rRNA. May interact with the 5'-terminal helix region of 16S rRNA. In Cereibacter sphaeroides (strain ATCC 17023 / DSM 158 / JCM 6121 / CCUG 31486 / LMG 2827 / NBRC 12203 / NCIMB 8253 / ATH 2.4.1.) (Rhodobacter sphaeroides), this protein is Ribosome-binding factor A.